The chain runs to 587 residues: Putative inactive receptor-like protein kinase At1g64210 (587 aa).

A signal peptide spans 1–19; that stretch reads MQIFLFFFSLILCFVLISS. The Extracellular segment spans residues 20–232; sequence QTLEDDKKAL…KTPFGLSQLA (213 aa). Residues Asn37 and Asn44 are each glycosylated (N-linked (GlcNAc...) asparagine). LRR repeat units follow at residues 89-112, 113-136, 137-160, 161-183, and 184-205; these read SLKF…TNLK, SLTH…SELK, NLKV…SGLT, SLQV…HLPK, and LSQI…LQRF. N-linked (GlcNAc...) asparagine glycans are attached at residues Asn149, Asn169, Asn188, and Asn214. The chain crosses the membrane as a helical span at residues 233–253; it reads FLLILSAACVLCVSGLSFIMI. Residues 254–587 lie on the Cytoplasmic side of the membrane; it reads TCFGKTRISG…IEDIRSVDAE (334 aa). The 275-residue stretch at 307-581 folds into the Protein kinase domain; that stretch reads SSSAEVLGKG…AQVLKLIEDI (275 aa). Ser309 carries the phosphoserine modification. ATP-binding positions include 313–321 and Lys335; that span reads LGKGAFGTT. A Phosphoserine modification is found at Ser386. Phosphothreonine occurs at positions 462, 463, 466, and 477.

The protein resides in the cell membrane. The sequence is that of Putative inactive receptor-like protein kinase At1g64210 from Arabidopsis thaliana (Mouse-ear cress).